A 348-amino-acid chain; its full sequence is DnaJ homolog subfamily B member 5 (348 aa).

The J domain occupies 4–68 (DYYKILGIPS…KKRSLYDQYG (65 aa)).

This Mus musculus (Mouse) protein is DnaJ homolog subfamily B member 5 (Dnajb5).